We begin with the raw amino-acid sequence, 194 residues long: Phosphoheptose isomerase (194 aa).

The SIS domain occupies 34 to 188 (LANIFTKGKK…IEGVERIMFP (155 aa)). Residue 49–51 (NGG) coordinates substrate. Zn(2+)-binding residues include histidine 58 and glutamate 62. Substrate-binding positions include glutamate 62, 90 to 91 (ND), 116 to 118 (STS), serine 121, and glutamine 168. Residues glutamine 168 and histidine 176 each contribute to the Zn(2+) site.

It belongs to the SIS family. GmhA subfamily. The cofactor is Zn(2+).

Its subcellular location is the cytoplasm. The catalysed reaction is 2 D-sedoheptulose 7-phosphate = D-glycero-alpha-D-manno-heptose 7-phosphate + D-glycero-beta-D-manno-heptose 7-phosphate. Its pathway is carbohydrate biosynthesis; D-glycero-D-manno-heptose 7-phosphate biosynthesis; D-glycero-alpha-D-manno-heptose 7-phosphate and D-glycero-beta-D-manno-heptose 7-phosphate from sedoheptulose 7-phosphate: step 1/1. In terms of biological role, catalyzes the isomerization of sedoheptulose 7-phosphate in D-glycero-D-manno-heptose 7-phosphate. The sequence is that of Phosphoheptose isomerase from Fusobacterium nucleatum subsp. nucleatum (strain ATCC 25586 / DSM 15643 / BCRC 10681 / CIP 101130 / JCM 8532 / KCTC 2640 / LMG 13131 / VPI 4355).